The sequence spans 1216 residues: MAAMAPGGGGSGSGVNPFLSDSDEDDDEVAATEDRRAGLRLGAGVGLDPGSAGSLSPQDPMALGSSARPGLAVEMSAAPAALGGSGETPARLSIDAIAAQLLRDQYLLTALELHTELLESGRELPRLRDYFSNPGNFERQSGTPPGMGAPGIPGASIVGGAGGREPSTTSGGGQLNRAGSISTLDSLDFARYSDDGNRETDERVAVLEFELRKAKETIQALRANLTKAAEHEVPLQERKNYKSSPEIQEPIKPLEKRALNFLVNEFLLKNNYKLTSITFSDENDDQDFELWDDVGLNIPKPPDLLQLYRDFGNHQVTGKDLVDVASGVDEDELEALTPILGNVPPTLDTPLPIENTLLVQKLEDKISLLNNEKWSLMEQIRRLESEMDILKAEHFATPAVGDSVQPSLVWSSQKDSEDNRQSPAVNSSDQEKTKDVHLEIPDAADSFIPKENSSGSFPRKEREELPPSSVSNKTTLHFDQPNRKLSPAFHQALLSFCRMSADSRLGSEVSRIADSEKSVMLMLGRCLPHIVPNVLLAKREELIPLILCTACLHPEPKERDQLLHILFNLIKRPDDEQRQMILTGCVAFARHVGPTRVEAELLPQCWEQINHKYPERRLLVAESCGALAPYLPKEIRSSLVLSMLQQMLMEDKADLVREAVIKSLGIIMGYIDDPDKYQQGFELLLSALGDPSERVVSATHQVFLPAYAAWTTELGNLQSHLIPTLLNKIEKLLREGEHGLDEHKLHMYLSALQSLIPSLFALVLQNAPFSSKAKLHGEVPHIEVTRFPRPMSPLQDVSTIIGSREQLAVLLQLYDYQLEHEGTTGWESLLWVVNQLLPQLIEIVGKINVTSTACVHEFSRFFWRLCRTFGKIFTNTKVKPQFQEILRLSEENIDSSAGNGVLTKATVPIYATGVLTCYIQEEDRKLLVGFLEDVMTLLSLSHAPLDSLKASFVELGANPAYHELLLTVLWYGVVHTSALVRCTAARMFELLVKGVNETLVAQRVVPALITLSSDPEISVRIATIPAFGTIMETVIQRELLERVKMQLASFLEDPQYQDQHSLHTEVIRTFGRVGPNAEPRFRDEFVIPHLHKLALVNNLQIVDSKKLDIATHLFEAYSALSCCFISEDLMVNHFLPGLRCLRTDMEHLSPEHEVILSSMIKECEQKVENKTVQEPPGSMSIAASLVSEDTKTKFLNKMGQLTTSGAMLANVFQRKK.

A compositionally biased stretch (gly residues) spans 1–13 (MAAMAPGGGGSGS). Disordered regions lie at residues 1 to 67 (MAAM…GSSA) and 133 to 179 (NPGN…NRAG). An N-acetylalanine modification is found at alanine 2. Phosphoserine occurs at positions 20 and 22. Positions 21-31 (DSDEDDDEVAA) are enriched in acidic residues. Threonine 32 bears the Phosphothreonine mark. Serine 54 and serine 56 each carry phosphoserine. Low complexity predominate over residues 142 to 154 (GTPPGMGAPGIPG). Phosphoserine occurs at positions 180 and 182. Threonine 183 is subject to Phosphothreonine. Position 186 is a phosphoserine (serine 186). Positions 197-231 (NRETDERVAVLEFELRKAKETIQALRANLTKAAEH) form a coiled coil. The 33-residue stretch at 255-287 (EKRALNFLVNEFLLKNNYKLTSITFSDENDDQD) folds into the LisH domain. Residues 358-397 (LVQKLEDKISLLNNEKWSLMEQIRRLESEMDILKAEHFAT) adopt a coiled-coil conformation. Serine 385 carries the post-translational modification Phosphoserine. The tract at residues 409-473 (VWSSQKDSED…ELPPSSVSNK (65 aa)) is disordered. Over residues 429–440 (DQEKTKDVHLEI) the composition is skewed to basic and acidic residues. Serine 453 carries the phosphoserine modification. The interaction with RAB11A and RAB11B stretch occupies residues 497-779 (CRMSADSRLG…SSKAKLHGEV (283 aa)). HEAT repeat units lie at residues 601–639 (LLPQ…RSSL) and 640–679 (VLSM…KYQQ). Serine 792 is modified (phosphoserine). The stretch at 1004–1042 (VVPALITLSSDPEISVRIATIPAFGTIMETVIQRELLER) is one HEAT 3 repeat. Serine 1149 carries the phosphoserine modification.

As to quaternary structure, interacts with RAB11A (VIA-GTP form). Interacts with RAB11B. Interacts (via the third HEAT repeat) with OSBP (via C-terminus). Found in a complex composed of RELCH, OSBP1 and RAB11A.

The protein resides in the recycling endosome. It localises to the golgi apparatus. It is found in the trans-Golgi network. Regulates intracellular cholesterol distribution from recycling endosomes to the trans-Golgi network through interactions with RAB11 and OSBP. Functions in membrane tethering and promotes OSBP-mediated cholesterol transfer between RAB11-bound recycling endosomes and OSBP-bound Golgi-like membranes. This is RAB11-binding protein RELCH (Relch) from Mus musculus (Mouse).